The following is an 896-amino-acid chain: Translation initiation factor IF-2 (896 aa).

Residues 49–310 (LKKEHGDTSG…MQQGFDKSAT (262 aa)) form a disordered region. Polar residues predominate over residues 57–66 (SGETEPTRLT). Composition is skewed to basic and acidic residues over residues 101-174 (STIE…KDMN), 184-240 (AKKE…KSAD), and 250-263 (REAE…DEKA). Residues 284 to 295 (RNQRGRGGKGKL) show a composition bias toward basic residues. Residues 395-564 (GRAPVVTIMG…LLQSEVLELT (170 aa)) form the tr-type G domain. The tract at residues 404–411 (GHVDHGKT) is G1. A GTP-binding site is contributed by 404–411 (GHVDHGKT). Residues 429-433 (GITQH) form a G2 region. The segment at 450–453 (DTPG) is G3. Residues 450–454 (DTPGH) and 504–507 (NKID) contribute to the GTP site. The G4 stretch occupies residues 504 to 507 (NKID). The tract at residues 540–542 (SAK) is G5.

The protein belongs to the TRAFAC class translation factor GTPase superfamily. Classic translation factor GTPase family. IF-2 subfamily.

The protein localises to the cytoplasm. Its function is as follows. One of the essential components for the initiation of protein synthesis. Protects formylmethionyl-tRNA from spontaneous hydrolysis and promotes its binding to the 30S ribosomal subunits. Also involved in the hydrolysis of GTP during the formation of the 70S ribosomal complex. This is Translation initiation factor IF-2 from Vibrio atlanticus (strain LGP32) (Vibrio splendidus (strain Mel32)).